Reading from the N-terminus, the 211-residue chain is Ribonuclease HII (211 aa).

The region spanning 2–211 (MLILGVDEAG…TAQRLKASSV (210 aa)) is the RNase H type-2 domain. A divalent metal cation is bound by residues Asp-8, Glu-9, and Asp-106.

This sequence belongs to the RNase HII family. It depends on Mn(2+) as a cofactor. The cofactor is Mg(2+).

Its subcellular location is the cytoplasm. It catalyses the reaction Endonucleolytic cleavage to 5'-phosphomonoester.. Endonuclease that specifically degrades the RNA of RNA-DNA hybrids. The polypeptide is Ribonuclease HII (Methanothrix thermoacetophila (strain DSM 6194 / JCM 14653 / NBRC 101360 / PT) (Methanosaeta thermophila)).